We begin with the raw amino-acid sequence, 348 residues long: GTP 3',8-cyclase (348 aa).

In terms of domain architecture, Radical SAM core spans 24-242; it reads PFGRAVTYLR…EKQFTLTDID (219 aa). A GTP-binding site is contributed by Arg-33. 2 residues coordinate [4Fe-4S] cluster: Cys-40 and Cys-44. S-adenosyl-L-methionine is bound at residue Tyr-46. [4Fe-4S] cluster is bound at residue Cys-47. Arg-82 is a binding site for GTP. Gly-86 serves as a coordination point for S-adenosyl-L-methionine. Thr-115 lines the GTP pocket. Ser-139 contributes to the S-adenosyl-L-methionine binding site. Lys-175 serves as a coordination point for GTP. An S-adenosyl-L-methionine-binding site is contributed by Met-209. 2 residues coordinate [4Fe-4S] cluster: Cys-272 and Cys-275. 277-279 serves as a coordination point for GTP; that stretch reads RVR. Cys-289 is a binding site for [4Fe-4S] cluster.

Belongs to the radical SAM superfamily. MoaA family. In terms of assembly, monomer and homodimer. [4Fe-4S] cluster is required as a cofactor.

It carries out the reaction GTP + AH2 + S-adenosyl-L-methionine = (8S)-3',8-cyclo-7,8-dihydroguanosine 5'-triphosphate + 5'-deoxyadenosine + L-methionine + A + H(+). It participates in cofactor biosynthesis; molybdopterin biosynthesis. Its function is as follows. Catalyzes the cyclization of GTP to (8S)-3',8-cyclo-7,8-dihydroguanosine 5'-triphosphate. This is GTP 3',8-cyclase from Rhizobium leguminosarum bv. trifolii (strain WSM2304).